The chain runs to 190 residues: Threonylcarbamoyl-AMP synthase (190 aa).

The YrdC-like domain maps to 7–190 (LSSLIKCIRK…IVNGKLIRYV (184 aa)).

The protein belongs to the SUA5 family. TsaC subfamily.

The protein resides in the cytoplasm. It carries out the reaction L-threonine + hydrogencarbonate + ATP = L-threonylcarbamoyladenylate + diphosphate + H2O. In terms of biological role, required for the formation of a threonylcarbamoyl group on adenosine at position 37 (t(6)A37) in tRNAs that read codons beginning with adenine. Catalyzes the conversion of L-threonine, HCO(3)(-)/CO(2) and ATP to give threonylcarbamoyl-AMP (TC-AMP) as the acyladenylate intermediate, with the release of diphosphate. The protein is Threonylcarbamoyl-AMP synthase of Buchnera aphidicola subsp. Schizaphis graminum (strain Sg).